The following is a 390-amino-acid chain: 1-acyl-sn-glycerol-3-phosphate acyltransferase 2 (390 aa).

The helical transmembrane segment at 2-22 threads the bilayer; the sequence is AMAAAVIVPLGILFFISGLVV. The short motif at 91 to 96 is the HXXXXD motif element; the sequence is HRSDID. Helical transmembrane passes span 305 to 325 and 333 to 353; these read LAVV…FLHW and KGIA…QILI. Positions 358–390 are disordered; it reads SERSTPAKVAPAKPKDNHQSGPSSQTEVEEKQK.

The protein belongs to the 1-acyl-sn-glycerol-3-phosphate acyltransferase family.

It is found in the endoplasmic reticulum membrane. It catalyses the reaction a 1-acyl-sn-glycero-3-phosphate + an acyl-CoA = a 1,2-diacyl-sn-glycero-3-phosphate + CoA. Its pathway is phospholipid metabolism; CDP-diacylglycerol biosynthesis; CDP-diacylglycerol from sn-glycerol 3-phosphate: step 2/3. In terms of biological role, converts lysophosphatidic acid (LPA) into phosphatidic acid by incorporating acyl moiety at the 2 position. This chain is 1-acyl-sn-glycerol-3-phosphate acyltransferase 2 (LPAT2), found in Brassica napus (Rape).